The sequence spans 477 residues: Proline--tRNA ligase (477 aa).

It belongs to the class-II aminoacyl-tRNA synthetase family. ProS type 3 subfamily. As to quaternary structure, homodimer.

The protein resides in the cytoplasm. The catalysed reaction is tRNA(Pro) + L-proline + ATP = L-prolyl-tRNA(Pro) + AMP + diphosphate. Catalyzes the attachment of proline to tRNA(Pro) in a two-step reaction: proline is first activated by ATP to form Pro-AMP and then transferred to the acceptor end of tRNA(Pro). This Lachnoclostridium phytofermentans (strain ATCC 700394 / DSM 18823 / ISDg) (Clostridium phytofermentans) protein is Proline--tRNA ligase.